The chain runs to 511 residues: Serine/threonine-protein kinase Nek3 (511 aa).

M1 carries the post-translational modification N-acetylmethionine. The tract at residues 1-282 (MDNYTVLRVI…EQILDEIKIS (282 aa)) is interaction with VAV2. The Protein kinase domain maps to 4 to 255 (YTVLRVIGQG…ATTLLCRGSL (252 aa)). ATP contacts are provided by residues 10-18 (IGQGSFGRA) and K33. The Proton acceptor role is filled by D125. T159 carries the phosphothreonine; by autocatalysis modification. Disordered stretches follow at residues 299–370 (LGEA…GPSS) and 443–511 (GPLS…GERA). Residues 309 to 321 (EEERGRKCSHTEL) show a composition bias toward basic and acidic residues. Residues 472–485 (LDEEDTDFEEDNEN) show a composition bias toward acidic residues. T477 is modified (phosphothreonine). Residues 498–511 (YGDGPGGQLLGERA) are compositionally biased toward gly residues.

Belongs to the protein kinase superfamily. NEK Ser/Thr protein kinase family. NIMA subfamily. Interacts with PXN, PRLR, VAV1 and VAV2 and this interaction is prolactin-dependent. It depends on Mg(2+) as a cofactor. Phosphorylation at Thr-477 regulates its catalytic activity. In terms of tissue distribution, brain.

Its subcellular location is the cytoplasm. It localises to the cell projection. The protein localises to the axon. It carries out the reaction L-seryl-[protein] + ATP = O-phospho-L-seryl-[protein] + ADP + H(+). The catalysed reaction is L-threonyl-[protein] + ATP = O-phospho-L-threonyl-[protein] + ADP + H(+). Protein kinase which influences neuronal morphogenesis and polarity through effects on microtubules. Regulates microtubule acetylation in neurons. Contributes to prolactin-mediated phosphorylation of PXN and VAV2. This chain is Serine/threonine-protein kinase Nek3 (Nek3), found in Mus musculus (Mouse).